The sequence spans 709 residues: Polyribonucleotide nucleotidyltransferase (709 aa).

Mg(2+)-binding residues include Asp-485 and Asp-491. A KH domain is found at 552-611 (PRIHTMKIDPKKIKDVIGKGGATIRALTEETGTSIDIDDDGTVKIAATDNNAAKRVMERI). The S1 motif domain maps to 621–689 (NAIYKGKVTR…RQGRIRLTMK (69 aa)).

This sequence belongs to the polyribonucleotide nucleotidyltransferase family. In terms of assembly, component of the RNA degradosome, which is a multiprotein complex involved in RNA processing and mRNA degradation. It depends on Mg(2+) as a cofactor.

It localises to the cytoplasm. The catalysed reaction is RNA(n+1) + phosphate = RNA(n) + a ribonucleoside 5'-diphosphate. Involved in mRNA degradation. Catalyzes the phosphorolysis of single-stranded polyribonucleotides processively in the 3'- to 5'-direction. This Glaesserella parasuis serovar 5 (strain SH0165) (Haemophilus parasuis) protein is Polyribonucleotide nucleotidyltransferase.